The following is a 505-amino-acid chain: UDP-N-acetylmuramoyl-L-alanyl-D-glutamate--2,6-diaminopimelate ligase (505 aa).

S42 contacts UDP-N-acetyl-alpha-D-muramoyl-L-alanyl-D-glutamate. Residue 126 to 132 (GTNGKTT) participates in ATP binding. UDP-N-acetyl-alpha-D-muramoyl-L-alanyl-D-glutamate-binding positions include 168-169 (TT), S195, Q201, and R203. At K235 the chain carries N6-carboxylysine. Meso-2,6-diaminopimelate is bound by residues R399, 423–426 (DNPR), G474, and E478. The Meso-diaminopimelate recognition motif signature appears at 423 to 426 (DNPR).

Belongs to the MurCDEF family. MurE subfamily. The cofactor is Mg(2+). In terms of processing, carboxylation is probably crucial for Mg(2+) binding and, consequently, for the gamma-phosphate positioning of ATP.

The protein resides in the cytoplasm. The enzyme catalyses UDP-N-acetyl-alpha-D-muramoyl-L-alanyl-D-glutamate + meso-2,6-diaminopimelate + ATP = UDP-N-acetyl-alpha-D-muramoyl-L-alanyl-gamma-D-glutamyl-meso-2,6-diaminopimelate + ADP + phosphate + H(+). It functions in the pathway cell wall biogenesis; peptidoglycan biosynthesis. Its function is as follows. Catalyzes the addition of meso-diaminopimelic acid to the nucleotide precursor UDP-N-acetylmuramoyl-L-alanyl-D-glutamate (UMAG) in the biosynthesis of bacterial cell-wall peptidoglycan. The polypeptide is UDP-N-acetylmuramoyl-L-alanyl-D-glutamate--2,6-diaminopimelate ligase (Synechocystis sp. (strain ATCC 27184 / PCC 6803 / Kazusa)).